We begin with the raw amino-acid sequence, 107 residues long: MQLSTTPNLEGFTITEYCGVVTGEAILGANIFRDFFASIRDVVGGRSGAYEKELRKARQIAFKELQEQAEDLGANAIVGIDLDYETVGKDGSMLMVTVSGTAVKVRR.

It belongs to the UPF0145 family.

This is UPF0145 protein ECA2666 from Pectobacterium atrosepticum (strain SCRI 1043 / ATCC BAA-672) (Erwinia carotovora subsp. atroseptica).